We begin with the raw amino-acid sequence, 473 residues long: MSMKISEKKFNDRVGDGIQDSFMRGAVSSAQTRLYTNRLKAADELGNWEEWRELGEEIRQHTLENLDYYLMQLSENVSKRGGHVYFAKTKEEAAKYIQDVAKKKQAKKVVKSKSMVTEEISMNHALEEIGCEVLESDLGEYILQVDNDPPSHIIAPALHKNRTQIRNVFKEKLGYENSDDPYEMTKFVRKQLREKFMDAEIGVTGCNFAVANTGSLCLVTNEGNADLVMSIPKTQIAVMGMERMVPTMEELDVLVGLLCRSAVGQKLTSYVTVAGPIQEEEVDGPEEFHLVVVDNGRSQILGSEFRQVLQCIRCAACVNVCPVYRHVGGHSYGSIYSGPIGAVLTPLLGGYNDYKELPYASSLCGACTEACPVKIPLHDLLLKHRQVIVEQEGRAPLAEKLAMKMFSMGASSAALYKMGSKMAPAAMSPFTSGNRVSKGVGPLKNWTDIREFPAPSKERFRDWYKDHKKGGDK.

4Fe-4S ferredoxin-type domains follow at residues 302–332 (GSEF…GHSY) and 351–380 (YNDY…LHDL). [4Fe-4S] cluster-binding residues include cysteine 311, cysteine 314, cysteine 317, cysteine 321, cysteine 364, cysteine 367, and cysteine 371.

Belongs to the LutB/YkgF family.

Is involved in L-lactate degradation and allows cells to grow with lactate as the sole carbon source. Has probably a role as an electron transporter during oxidation of L-lactate. The sequence is that of Lactate utilization protein B from Bacillus cereus (strain AH820).